The chain runs to 545 residues: Probable intron-encoded endonuclease 4 (545 aa).

Helical transmembrane passes span 1 to 21, 30 to 50, 81 to 101, 119 to 139, 140 to 160, 177 to 197, and 200 to 220; these read MYLS…FFGR, LITC…FFEV, LTVA…IYSI, LFTF…MFVG, WEGV…RIAA, FLTI…YATV, and LAPY…LIGA. The segment at 1–239 is ndh-5 exons 1 and 2 encoded; that stretch reads MYLSIIILPL…HVWLPMAMEG (239 aa). A ndh-5 intron 2 encoded region spans residues 240–545; sequence FFSRAFLKLH…NNINKSDYNK (306 aa).

This sequence in the N-terminal section; belongs to the complex I subunit 5 family. In the C-terminal section; belongs to the LAGLIDADG endonuclease family.

It localises to the mitochondrion membrane. Its function is as follows. Mitochondrial DNA endonuclease involved in intron homing. In Neurospora crassa (strain ATCC 24698 / 74-OR23-1A / CBS 708.71 / DSM 1257 / FGSC 987), this protein is Probable intron-encoded endonuclease 4.